Reading from the N-terminus, the 277-residue chain is Shikimate dehydrogenase (NADP(+)) (277 aa).

Shikimate is bound by residues 15–17 (SLS) and T62. Residue K66 is the Proton acceptor of the active site. 2 residues coordinate shikimate: N87 and D102. Residues 127–131 (GAGGA), 151–156 (NRTVDK), and I219 each bind NADP(+). Shikimate is bound at residue Y221. An NADP(+)-binding site is contributed by G242.

The protein belongs to the shikimate dehydrogenase family. In terms of assembly, homodimer.

It catalyses the reaction shikimate + NADP(+) = 3-dehydroshikimate + NADPH + H(+). The protein operates within metabolic intermediate biosynthesis; chorismate biosynthesis; chorismate from D-erythrose 4-phosphate and phosphoenolpyruvate: step 4/7. Involved in the biosynthesis of the chorismate, which leads to the biosynthesis of aromatic amino acids. Catalyzes the reversible NADPH linked reduction of 3-dehydroshikimate (DHSA) to yield shikimate (SA). The sequence is that of Shikimate dehydrogenase (NADP(+)) from Bacillus cereus (strain AH820).